The primary structure comprises 222 residues: MIF4G domain-containing protein (222 aa).

The MIF4G domain occupies 3–205 (EASRDDYKIQ…LEMIEFRAAG (203 aa)).

The protein belongs to the MIF4GD family. As to quaternary structure, interacts with EIF4G1, EIF4G2 and SLBP; probably tethered by SLBP to the 3'-end of mRNAs ending with the histone stem-loop, it also interacts with EIF4G1 which is bound to their 5'-end.

Its subcellular location is the cytoplasm. The protein localises to the nucleus. Functions in replication-dependent translation of histone mRNAs which differ from other eukaryotic mRNAs in that they do not end with a poly-A tail but a stem-loop. May participate in circularizing those mRNAs specifically enhancing their translation. This chain is MIF4G domain-containing protein (Mif4gd), found in Mus musculus (Mouse).